Consider the following 509-residue polypeptide: ATP synthase subunit alpha, mitochondrial (509 aa).

171-178 (GDRQTGKT) serves as a coordination point for ATP.

It belongs to the ATPase alpha/beta chains family. F-type ATPases have 2 components, CF(1) - the catalytic core - and CF(0) - the membrane proton channel. CF(1) has five subunits: alpha(3), beta(3), gamma(1), delta(1), epsilon(1). CF(0) has three main subunits: a, b and c.

Its subcellular location is the mitochondrion. It localises to the mitochondrion inner membrane. Its function is as follows. Mitochondrial membrane ATP synthase (F(1)F(0) ATP synthase or Complex V) produces ATP from ADP in the presence of a proton gradient across the membrane which is generated by electron transport complexes of the respiratory chain. F-type ATPases consist of two structural domains, F(1) - containing the extramembraneous catalytic core, and F(0) - containing the membrane proton channel, linked together by a central stalk and a peripheral stalk. During catalysis, ATP synthesis in the catalytic domain of F(1) is coupled via a rotary mechanism of the central stalk subunits to proton translocation. Subunits alpha and beta form the catalytic core in F(1). Rotation of the central stalk against the surrounding alpha(3)beta(3) subunits leads to hydrolysis of ATP in three separate catalytic sites on the beta subunits. Subunit alpha does not bear the catalytic high-affinity ATP-binding sites. This Triticum aestivum (Wheat) protein is ATP synthase subunit alpha, mitochondrial (ATPA).